The following is a 587-amino-acid chain: 65-kDa microtubule-associated protein 1 (587 aa).

Coiled coils occupy residues 46–84, 151–181, 234–257, 290–317, and 461–489; these read QECLDVYKRKVEQAAKSRAELLQTLSDANAELSSLTMSL, DESDLSLKKLDDFQSQLQELQKEKSDRLRKV, LTLKDDKKQRLQKLQELATQLIDL, ALARDLIEQAEVEVDRLDQLKASRMKEI, and AMLDEYGMLRQEREEEKRRLREQKKVQEQ. Over residues 474 to 494 the composition is skewed to basic and acidic residues; it reads EEEKRRLREQKKVQEQPHVEQ. The interval 474–587 is disordered; it reads EEEKRRLREQ…AADHQVPASP (114 aa). Ser503 carries the phosphoserine modification. At Thr526 the chain carries Phosphothreonine. The span at 531-542 shows a compositional bias: polar residues; it reads LSLNANQNGSRS. Ser532 and Ser540 each carry phosphoserine. Residues Thr543 and Thr552 each carry the phosphothreonine modification. Residues 543-553 show a composition bias toward basic and acidic residues; sequence TAKEAGRRETL. Phosphoserine is present on residues Ser573, Ser576, and Ser586.

Belongs to the MAP65/ASE1 family. In terms of assembly, forms dimer. Binds to MT, mostly with coaligned MT, both between parallel or antiparallel, forming thick bundles. Interacts with the alpha-tubulin subunit of the tubulin heterodimer. Bundles polymerized MT via the formation of 25-nm crossbridges at specific stages of the cell cycle (e.g. bundles microtubules in interphase, anaphase and telophase but does not bind microtubules in prophase or metaphase), at the plus-end, the minus-end, or along the entire length of MT, and along phragmoplast MT. Interacts with SH3P1 and MPK4. In terms of processing, basal phosphorylation at all stages of the cell cycle. MT-binding properties inhibited by hyperphosphorylation mediated by CDKs and/or MAPKs (e.g. ANP2, ANP3, MPK4 and MPK6) during prometaphase and metaphase. As to expression, expressed in all organs and tissues with the exception of sepals and anthers. Bound to subsets of microtubules in the cells of root epidermis, hypocotyl and cotyledons (at protein level).

Its subcellular location is the nucleus. The protein localises to the cytoplasm. It localises to the cytoskeleton. The protein resides in the spindle. It is found in the phragmoplast. Its subcellular location is the cell cortex. Microtubule-associated protein that bundle and stabilize adjacent microtubules (MT) of the cell cortex. Enhances MT nucleation. Can also bind to tubulin dimers and promotes their polymerization. Confers MT resistance to the drug propyzamide and cold conditions. Plays a role in the central spindle at anaphase to early cytokinesis but is not essential at the midline of the phragmoplast at later stages. Represses metaphase spindle organization and the transition to anaphase in dephosphorylated active form. Promotes the formation of a planar network of antiparallel microtubules. May be involved in stomatal movement modulation by regulating the dynamic and arrangement of cortical MT. The sequence is that of 65-kDa microtubule-associated protein 1 (MAP65-1) from Arabidopsis thaliana (Mouse-ear cress).